The following is a 124-amino-acid chain: Ribonuclease VapC32 (124 aa).

Positions 2 to 112 (ILVDTSVWIE…TRDKRLKAAC (111 aa)) constitute a PINc domain. Mg(2+)-binding residues include Asp-5 and Asp-86.

The protein belongs to the PINc/VapC protein family. Mg(2+) serves as cofactor.

Functionally, toxic component of a type II toxin-antitoxin (TA) system. An RNase. Its toxic effect is neutralized by coexpression with cognate antitoxin VapB32. This chain is Ribonuclease VapC32, found in Mycobacterium tuberculosis (strain CDC 1551 / Oshkosh).